Reading from the N-terminus, the 259-residue chain is Polycomb group RING finger protein 1 (259 aa).

Ala-2 carries the N-acetylalanine modification. Phosphoserine is present on Ser-3. A Glycyl lysine isopeptide (Lys-Gly) (interchain with G-Cter in SUMO2) cross-link involves residue Lys-24. An RING-type zinc finger spans residues 47-86 (CCLCAGYFVDATTITECLHTFCKSCIVKYLQTSKYCPMCN). The interval 86–247 (NIKIHETQPL…LSRWFGKPSP (162 aa)) is required for repressor activity. Residue Lys-88 forms a Glycyl lysine isopeptide (Lys-Gly) (interchain with G-Cter in SUMO2) linkage. The tract at residues 150–255 (LPFSSFDHSK…SPLLLQYSVK (106 aa)) is required for the interaction with the KDM2B-SKP1 heterodimeric complex. The RING-finger and WD40-associated ubiquitin-like domain (RAWUL); sufficient for interaction with BCOR and BCORL1 stretch occupies residues 167–255 (EQLNLCLERL…SPLLLQYSVK (89 aa)).

As to quaternary structure, interacts with BCORL1, forming heterodimers. The PCGF1-BCORL1 heterodimeric complex interacts with the KDM2B-SKP1 heterodimeric complex to form a homotetrameric polycomb repression complex 1 (PRC1.1). Component of the repressive BCOR complex containing a Polycomb group subcomplex at least composed of RYBP, RING1 and RNF2/RING2. Specifically interacts with BCOR, RING1 and RNF2/RING2. Component of a PRC1-like complex. Interacts with CBX6, CBX7 and CBX8. Interacts with DPPA4, NANOG, POU5F1 and RYBP. In terms of tissue distribution, ubiquitous.

The protein localises to the nucleus. Functionally, component of the Polycomb group (PcG) multiprotein BCOR complex, a complex required to maintain the transcriptionally repressive state of some genes, such as BCL6 and the cyclin-dependent kinase inhibitor, CDKN1A. Transcriptional repressor that may be targeted to the DNA by BCL6; this transcription repressor activity may be related to PKC signaling pathway. Represses CDKN1A expression by binding to its promoter, and this repression is dependent on the retinoic acid response element (RARE element). Promotes cell cycle progression and enhances cell proliferation as well. May have a positive role in tumor cell growth by down-regulating CDKN1A. Component of a Polycomb group (PcG) multiprotein PRC1-like complex, a complex class required to maintain the transcriptionally repressive state of many genes, including Hox genes, throughout development. PcG PRC1 complex acts via chromatin remodeling and modification of histones; it mediates monoubiquitination of histone H2A 'Lys-119', rendering chromatin heritably changed in its expressibility. Within the PRC1-like complex, regulates RNF2 ubiquitin ligase activity. Regulates the expression of DPPA4 and NANOG in the NT2 embryonic carcinoma cells. In Homo sapiens (Human), this protein is Polycomb group RING finger protein 1 (PCGF1).